The sequence spans 325 residues: Glutarate 2-hydroxylase (325 aa).

The Fe cation site is built by His-160, Asp-162, and His-292.

This sequence belongs to the glutarate hydroxylase family. As to quaternary structure, homotetramer. Fe(2+) is required as a cofactor.

It carries out the reaction glutarate + 2-oxoglutarate + O2 = (S)-2-hydroxyglutarate + succinate + CO2. Its pathway is amino-acid degradation. Functionally, acts as an alpha-ketoglutarate-dependent dioxygenase catalyzing hydroxylation of glutarate (GA) to L-2-hydroxyglutarate (L2HG). Functions in a L-lysine degradation pathway that proceeds via cadaverine, glutarate and L-2-hydroxyglutarate. The sequence is that of Glutarate 2-hydroxylase from Escherichia coli O127:H6 (strain E2348/69 / EPEC).